A 140-amino-acid polypeptide reads, in one-letter code: Nucleoside diphosphate kinase (140 aa).

6 residues coordinate ATP: lysine 11, phenylalanine 59, arginine 87, threonine 93, arginine 104, and asparagine 114. The active-site Pros-phosphohistidine intermediate is histidine 117.

This sequence belongs to the NDK family. Homotetramer. The cofactor is Mg(2+).

The protein resides in the cytoplasm. It catalyses the reaction a 2'-deoxyribonucleoside 5'-diphosphate + ATP = a 2'-deoxyribonucleoside 5'-triphosphate + ADP. The catalysed reaction is a ribonucleoside 5'-diphosphate + ATP = a ribonucleoside 5'-triphosphate + ADP. Functionally, major role in the synthesis of nucleoside triphosphates other than ATP. The ATP gamma phosphate is transferred to the NDP beta phosphate via a ping-pong mechanism, using a phosphorylated active-site intermediate. The protein is Nucleoside diphosphate kinase of Methylorubrum populi (strain ATCC BAA-705 / NCIMB 13946 / BJ001) (Methylobacterium populi).